The sequence spans 471 residues: UDP-N-acetylmuramate--L-alanine ligase (471 aa).

Residue Gly114–Thr120 coordinates ATP.

This sequence belongs to the MurCDEF family.

Its subcellular location is the cytoplasm. The catalysed reaction is UDP-N-acetyl-alpha-D-muramate + L-alanine + ATP = UDP-N-acetyl-alpha-D-muramoyl-L-alanine + ADP + phosphate + H(+). Its pathway is cell wall biogenesis; peptidoglycan biosynthesis. In terms of biological role, cell wall formation. This chain is UDP-N-acetylmuramate--L-alanine ligase, found in Methylobacterium nodulans (strain LMG 21967 / CNCM I-2342 / ORS 2060).